A 467-amino-acid polypeptide reads, in one-letter code: UTP--glucose-1-phosphate uridylyltransferase (467 aa).

UTP is bound by residues leucine 83–glycine 86, lysine 97, glutamine 160, and glycine 189. Glycine 85–glycine 86 is a binding site for substrate. Substrate-binding positions include histidine 190 and asparagine 218–aspartate 220. Positions 220 and 358 each coordinate UTP.

This sequence belongs to the UDPGP type 1 family.

It is found in the cytoplasm. It catalyses the reaction alpha-D-glucose 1-phosphate + UTP + H(+) = UDP-alpha-D-glucose + diphosphate. Functionally, plays a central role as a glucosyl donor in cellular metabolic pathways. The polypeptide is UTP--glucose-1-phosphate uridylyltransferase (UGPA) (Musa acuminata (Banana)).